An 86-amino-acid polypeptide reads, in one-letter code: Synergistic-like venom protein (86 aa).

The first 21 residues, 1 to 21 (MKTLLLTLVVVTIVCLDLGYT), serve as a signal peptide directing secretion. 4 disulfides stabilise this stretch: C24–C45, C38–C63, C67–C78, and C79–C84.

Belongs to the three-finger toxin family. Short-chain subfamily. Aminergic toxin sub-subfamily. Expressed by the venom gland.

Its subcellular location is the secreted. The sequence is that of Synergistic-like venom protein from Dendroaspis angusticeps (Eastern green mamba).